Here is a 370-residue protein sequence, read N- to C-terminus: ADP-ribosylation factor-like protein 13B (370 aa).

4 S-palmitoyl cysteine lipidation sites follow: cysteine 12, cysteine 13, cysteine 14, and cysteine 15. GTP contacts are provided by residues 31–38, 75–79, and 134–137; these read GIGSAGKT, DVGGD, and NNQN. Lysine 239 is covalently cross-linked (Glycyl lysine isopeptide (Lys-Gly) (interchain with G-Cter in SUMO)). Residues 255–331 form a disordered region; that stretch reads RNQPPVQPPI…PVSPESNSVK (77 aa). Positions 259–271 are enriched in pro residues; it reads PVQPPIPPDPPSD. 2 stretches are compositionally biased toward polar residues: residues 287 to 303 and 314 to 328; these read LASS…TPET and RISQ…PESN. Lysine 331 participates in a covalent cross-link: Glycyl lysine isopeptide (Lys-Gly) (interchain with G-Cter in SUMO). Residues 366–369 are RVVP region; that stretch reads RVVP.

This sequence belongs to the small GTPase superfamily. Arf family. In terms of assembly, monomer. Sumoylation regulates the targeting of membrane sensory receptors to the cilium. In terms of tissue distribution, specifically expressed in ciliated sensory neurons throughout development in both hermaphrodites.

The protein resides in the cell projection. Its subcellular location is the cilium membrane. Cilium-specific protein required to control the microtubule-based, ciliary axoneme structure. Required for normal sensory cilium function. May act by maintaining the association between IFT subcomplexes A and B. The chain is ADP-ribosylation factor-like protein 13B (arl-13) from Caenorhabditis elegans.